The primary structure comprises 938 residues: Protein zds1 (938 aa).

The span at 1–13 (MSSSSVSNTLSIE) shows a compositional bias: polar residues. 3 disordered regions span residues 1–140 (MSSS…LDKE), 326–386 (HRGK…VENQ), and 424–807 (SENK…EPKT). The span at 40-54 (LSGSSSEPLENNSSL) shows a compositional bias: low complexity. The span at 57–67 (STDDPSVEIRS) shows a compositional bias: basic and acidic residues. Residues 77–86 (NLLSDQNITI) are compositionally biased toward polar residues. Residues 116–126 (SDAQSSVPSFS) show a composition bias toward low complexity. Residues 127-140 (EIHDGMSEEELDKE) show a composition bias toward basic and acidic residues. 2 stretches are compositionally biased toward polar residues: residues 330–349 (TSTL…TDTS) and 370–380 (TSALSNSQNPS). Residues 429–440 (ESAVASESSLSE) show a composition bias toward low complexity. Basic and acidic residues-rich tracts occupy residues 467–485 (NKAE…DKSE) and 512–556 (NKAE…KADD). The span at 558–567 (LPSNNKTEGY) shows a compositional bias: polar residues. The segment covering 587 to 596 (VIPPRVPTPV) has biased composition (pro residues). Basic and acidic residues predominate over residues 622–635 (SSKKPEIFHERHIP). The segment covering 642–669 (NKPSKNNILKSTQVPVTPKQKSSTANKG) has biased composition (polar residues). The span at 702-711 (KEHKKDKQKK) shows a compositional bias: basic residues. Residues 715 to 725 (QISSSSKSASS) show a composition bias toward low complexity. Basic and acidic residues predominate over residues 798-807 (SDEKSTEPKT).

Its subcellular location is the cytoplasm. Has a role in establishing cell polarity. Also required for maintenance of cell wall integrity, sexual differentiation, calcium tolerance and cell morphology. Involved in Ras-MAPK signaling pathway at cell cortex. Has a role in meiosis. The sequence is that of Protein zds1 (zds1) from Schizosaccharomyces pombe (strain 972 / ATCC 24843) (Fission yeast).